The sequence spans 196 residues: DNA replication complex GINS protein PSF1 (196 aa).

Belongs to the GINS1/PSF1 family. As to quaternary structure, component of the GINS complex which is a heterotetramer of gins1/psf1, gins2/psf2, gins3/psf3 and gins4/sld5. Component of the CMG helicase complex, composed of the mcm2-7 complex, the GINS complex and cdc45.

The protein resides in the nucleus. Its subcellular location is the chromosome. Required for correct functioning of the GINS complex, a complex that plays an essential role in the initiation of DNA replication, and progression of DNA replication forks. GINS complex is a core component of CDC45-MCM-GINS (CMG) helicase, the molecular machine that unwinds template DNA during replication, and around which the replisome is built. In Xenopus laevis (African clawed frog), this protein is DNA replication complex GINS protein PSF1.